The sequence spans 156 residues: Endoribonuclease YbeY (156 aa).

The Zn(2+) site is built by H115, H119, and H125.

Belongs to the endoribonuclease YbeY family. Zn(2+) is required as a cofactor.

It localises to the cytoplasm. Functionally, single strand-specific metallo-endoribonuclease involved in late-stage 70S ribosome quality control and in maturation of the 3' terminus of the 16S rRNA. The protein is Endoribonuclease YbeY of Actinobacillus succinogenes (strain ATCC 55618 / DSM 22257 / CCUG 43843 / 130Z).